A 109-amino-acid polypeptide reads, in one-letter code: Large ribosomal subunit protein P2 (109 aa).

A disordered region spans residues Ala-63–Asp-109. Residues Gly-68–Ala-79 are compositionally biased toward gly residues. The span at Glu-91–Met-103 shows a compositional bias: acidic residues. Ser-99 carries the phosphoserine modification.

The protein belongs to the eukaryotic ribosomal protein P1/P2 family. In terms of assembly, P1 and P2 exist as dimers at the large ribosomal subunit.

Functionally, plays an important role in the elongation step of protein synthesis. The polypeptide is Large ribosomal subunit protein P2 (Fusarium culmorum).